Reading from the N-terminus, the 456-residue chain is Glycosyl hydrolase family 109 protein 2 (456 aa).

A signal peptide (tat-type signal) is located at residues 1 to 33; it reads MSGFDRRSFLKASMVTAAATALAACASSERATG. Residues 63-64, Asp85, 134-137, 154-155, and Asn183 each bind NAD(+); these read ER, WAWH, and EV. Substrate-binding positions include Tyr212, Arg231, 243–246, and Tyr325; that span reads YPTH. Tyr243 contributes to the NAD(+) binding site.

The protein belongs to the Gfo/Idh/MocA family. Glycosyl hydrolase 109 subfamily. NAD(+) is required as a cofactor. Post-translationally, predicted to be exported by the Tat system. The position of the signal peptide cleavage has not been experimentally proven.

Glycosidase. This Shewanella sp. (strain MR-4) protein is Glycosyl hydrolase family 109 protein 2.